A 408-amino-acid chain; its full sequence is NFATC2-interacting protein (408 aa).

The interval 1 to 113 (MAEPVGKRGR…LDPGEAPLVP (113 aa)) is disordered. The span at 24–40 (QRSPSRGTLDVVSVDLV) shows a compositional bias: low complexity. S41, S43, S73, S77, S79, S81, and S116 each carry phosphoserine. Residues K118 and K120 each participate in a glycyl lysine isopeptide (Lys-Gly) (interchain with G-Cter in SUMO2) cross-link. A disordered region spans residues 141 to 205 (EEEVELADSS…TKSRKHTRAL (65 aa)). A compositionally biased stretch (basic and acidic residues) spans 169 to 181 (RTKDKEEKKKTEI). A phosphoserine mark is found at S187, S190, and S193. Positions 196-205 (TKSRKHTRAL) are enriched in basic residues. Residues 197 to 220 (KSRKHTRALKKLSEVNKRLQDLRS) adopt a coiled-coil conformation. 2 positions are modified to phosphoserine: S209 and S303. Residues T305 and T307 each carry the phosphothreonine modification. The region spanning 337–408 (LQLRVQGKEK…ESGDLIEVWG (72 aa)) is the Ubiquitin-like domain. Phosphoserine occurs at positions 358 and 379.

In terms of assembly, interacts with NFATC2, TRAF1, TRAF2 and PRMT1. Interacts with UBE2I/UBC9. In terms of processing, methylation at the N-terminus by PRMT1 modulates interaction with the NFAT complex and results in augmented cytokine production.

It localises to the nucleus. It is found in the cytoplasm. Its function is as follows. In T-helper 2 (Th2) cells, regulates the magnitude of NFAT-driven transcription of a specific subset of cytokine genes, including IL3, IL4, IL5 and IL13, but not IL2. Recruits PRMT1 to the IL4 promoter; this leads to enhancement of histone H4 'Arg-3'-methylation and facilitates subsequent histone acetylation at the IL4 locus, thus promotes robust cytokine expression. Down-regulates formation of poly-SUMO chains by UBE2I/UBC9. This chain is NFATC2-interacting protein (NFATC2IP), found in Macaca fascicularis (Crab-eating macaque).